Consider the following 176-residue polypeptide: ADP-ribosylation factor-like protein 11 (176 aa).

G2 carries N-myristoyl glycine lipidation. Residues 19–26, 63–67, and 122–125 contribute to the GTP site; these read GLDSAGKT, DIGGQ, and NKQE.

This sequence belongs to the small GTPase superfamily. Arf family.

May play a role in apoptosis. May act as a tumor suppressor. This is ADP-ribosylation factor-like protein 11 (Arl11) from Mus musculus (Mouse).